We begin with the raw amino-acid sequence, 199 residues long: MGNMDGKAVEELSATECHQWYKKFMTECPSGQLTLYEFKQFFGLKNLSPSANKYVEQMFETFDFNKDGYIDFMEYVAALSLVLKGKVDQKLRWYFKLYDVDGNGCIDRGELLNIIKAIRAINRCNEAMTAEEFTNMVFDKIDINGDGELSLEEFMEGVQKDEVLLDILTRSLDLTHIVKLIQNDGKNPHAPEEAEEAAQ.

The N-myristoyl glycine moiety is linked to residue Gly2. Position 3 is a deamidated asparagine (Asn3). EF-hand domains are found at residues 13–48 (SATECHQWYKKFMTECPSGQLTLYEFKQFFGLKNLS), 50–85 (SANKYVEQMFETFDFNKDGYIDFMEYVAALSLVLKG), 86–121 (KVDQKLRWYFKLYDVDGNGCIDRGELLNIIKAIRAI), and 129–164 (TAEEFTNMVFDKIDINGDGELSLEEFMEGVQKDEVL). Ca(2+) is bound by residues Asp63, Asn65, Asp67, Tyr69, Glu74, Asp99, Asp101, Asn103, Cys105, Glu110, Asp142, Asn144, Asp146, Glu148, and Glu153.

Retina, in rod and cone outer segments, and pineal gland.

Its function is as follows. Stimulates retinal guanylyl cyclase when free calcium ions concentration is low and inhibits guanylyl cyclase when free calcium ions concentration is elevated. This Ca(2+)-sensitive regulation of retinal guanylyl cyclase is a key event in recovery of the dark state of rod photoreceptors following light exposure. This is Guanylyl cyclase-activating protein 1 (GUCA1A) from Gallus gallus (Chicken).